Here is a 344-residue protein sequence, read N- to C-terminus: Lipase chaperone (344 aa).

The chain crosses the membrane as a helical span at residues A14–A34. A disordered region spans residues H37–S78. Over residues S43–S78 the composition is skewed to low complexity.

The protein belongs to the lipase chaperone family.

Its subcellular location is the cell inner membrane. In terms of biological role, may be involved in the folding of the extracellular lipase during its passage through the periplasm. This is Lipase chaperone (lifO) from Burkholderia cepacia (Pseudomonas cepacia).